The sequence spans 485 residues: Glutamate mutase epsilon subunit (485 aa).

Arginine 100 serves as a coordination point for L-glutamate. Asparagine 123 serves as a coordination point for adenosylcob(III)alamin. L-glutamate contacts are provided by residues 149-150 (KH) and aspartate 171. 4 residues coordinate adenosylcob(III)alamin: proline 180, phenylalanine 297, lysine 326, and glutamate 330.

It belongs to the methylaspartate mutase GlmE subunit family. Heterotetramer composed of 2 epsilon subunits (GlmE) and 2 sigma subunits (GlmS). GlmE exists as a homodimer and GlmS as a monomer. Adenosylcob(III)alamin serves as cofactor.

It catalyses the reaction (2S,3S)-3-methyl-L-aspartate = L-glutamate. It functions in the pathway amino-acid degradation; L-glutamate degradation via mesaconate pathway; acetate and pyruvate from L-glutamate: step 1/4. Its function is as follows. Catalyzes the carbon skeleton rearrangement of L-glutamate to L-threo-3-methylaspartate ((2S,3S)-3-methylaspartate). The sequence is that of Glutamate mutase epsilon subunit from Fusobacterium nucleatum subsp. nucleatum (strain ATCC 25586 / DSM 15643 / BCRC 10681 / CIP 101130 / JCM 8532 / KCTC 2640 / LMG 13131 / VPI 4355).